Reading from the N-terminus, the 581-residue chain is Arginine--tRNA ligase (581 aa).

A 'HIGH' region motif is present at residues 122–132 (PNVAKPMHVGH).

Belongs to the class-I aminoacyl-tRNA synthetase family. As to quaternary structure, monomer.

Its subcellular location is the cytoplasm. It carries out the reaction tRNA(Arg) + L-arginine + ATP = L-arginyl-tRNA(Arg) + AMP + diphosphate. The sequence is that of Arginine--tRNA ligase from Francisella tularensis subsp. tularensis (strain FSC 198).